We begin with the raw amino-acid sequence, 366 residues long: Molybdenum import ATP-binding protein ModC (366 aa).

One can recognise an ABC transporter domain in the interval 1–231 (MSEVILQLQK…KAMRPWQSFS (231 aa)). 33–40 (GRSGAGKT) contributes to the ATP binding site. The 70-residue stretch at 292-361 (ASSIRNILPA…IKGVSVAQRD (70 aa)) folds into the Mop domain.

It belongs to the ABC transporter superfamily. Molybdate importer (TC 3.A.1.8) family. The complex is composed of two ATP-binding proteins (ModC), two transmembrane proteins (ModB) and a solute-binding protein (ModA).

The protein resides in the cell inner membrane. The catalysed reaction is molybdate(out) + ATP + H2O = molybdate(in) + ADP + phosphate + H(+). In terms of biological role, part of the ABC transporter complex ModABC involved in molybdenum import. Responsible for energy coupling to the transport system. The polypeptide is Molybdenum import ATP-binding protein ModC (Vibrio cholerae serotype O1 (strain ATCC 39315 / El Tor Inaba N16961)).